Here is a 925-residue protein sequence, read N- to C-terminus: Isoleucine--tRNA ligase (925 aa).

A 'HIGH' region motif is present at residues 57 to 67 (PYANGDIHMGH). Glutamate 556 provides a ligand contact to L-isoleucyl-5'-AMP. Positions 597–601 (KMSKS) match the 'KMSKS' region motif. Lysine 600 contributes to the ATP binding site. Zn(2+) contacts are provided by cysteine 890, cysteine 893, cysteine 910, and cysteine 913.

The protein belongs to the class-I aminoacyl-tRNA synthetase family. IleS type 1 subfamily. In terms of assembly, monomer. It depends on Zn(2+) as a cofactor.

The protein resides in the cytoplasm. It carries out the reaction tRNA(Ile) + L-isoleucine + ATP = L-isoleucyl-tRNA(Ile) + AMP + diphosphate. Its function is as follows. Catalyzes the attachment of isoleucine to tRNA(Ile). As IleRS can inadvertently accommodate and process structurally similar amino acids such as valine, to avoid such errors it has two additional distinct tRNA(Ile)-dependent editing activities. One activity is designated as 'pretransfer' editing and involves the hydrolysis of activated Val-AMP. The other activity is designated 'posttransfer' editing and involves deacylation of mischarged Val-tRNA(Ile). The polypeptide is Isoleucine--tRNA ligase (Carboxydothermus hydrogenoformans (strain ATCC BAA-161 / DSM 6008 / Z-2901)).